Consider the following 125-residue polypeptide: Large ribosomal subunit protein bL19 (125 aa).

The protein belongs to the bacterial ribosomal protein bL19 family.

Functionally, this protein is located at the 30S-50S ribosomal subunit interface and may play a role in the structure and function of the aminoacyl-tRNA binding site. The sequence is that of Large ribosomal subunit protein bL19 from Wolbachia pipientis subsp. Culex pipiens (strain wPip).